A 350-amino-acid polypeptide reads, in one-letter code: Lipoyl synthase, mitochondrial (350 aa).

[4Fe-4S] cluster contacts are provided by Cys83, Cys88, Cys94, Cys113, Cys117, Cys120, and Ser328. The Radical SAM core domain occupies Gly96 to Ala317.

The protein belongs to the radical SAM superfamily. Lipoyl synthase family. It depends on [4Fe-4S] cluster as a cofactor.

The protein resides in the mitochondrion. The catalysed reaction is [[Fe-S] cluster scaffold protein carrying a second [4Fe-4S](2+) cluster] + N(6)-octanoyl-L-lysyl-[protein] + 2 oxidized [2Fe-2S]-[ferredoxin] + 2 S-adenosyl-L-methionine + 4 H(+) = [[Fe-S] cluster scaffold protein] + N(6)-[(R)-dihydrolipoyl]-L-lysyl-[protein] + 4 Fe(3+) + 2 hydrogen sulfide + 2 5'-deoxyadenosine + 2 L-methionine + 2 reduced [2Fe-2S]-[ferredoxin]. It participates in protein modification; protein lipoylation via endogenous pathway; protein N(6)-(lipoyl)lysine from octanoyl-[acyl-carrier-protein]: step 2/2. Its function is as follows. Catalyzes the radical-mediated insertion of two sulfur atoms into the C-6 and C-8 positions of the octanoyl moiety bound to the lipoyl domains of lipoate-dependent enzymes, thereby converting the octanoylated domains into lipoylated derivatives. This Trichoplax adhaerens (Trichoplax reptans) protein is Lipoyl synthase, mitochondrial.